Here is a 385-residue protein sequence, read N- to C-terminus: 8-amino-7-oxononanoate synthase (385 aa).

A substrate-binding site is contributed by R21. 108–109 (GF) serves as a coordination point for pyridoxal 5'-phosphate. Residue H133 participates in substrate binding. Pyridoxal 5'-phosphate contacts are provided by S179, H207, and T233. K236 bears the N6-(pyridoxal phosphate)lysine mark. Position 352 (T352) interacts with substrate.

The protein belongs to the class-II pyridoxal-phosphate-dependent aminotransferase family. BioF subfamily. Homodimer. Pyridoxal 5'-phosphate is required as a cofactor.

The enzyme catalyses 6-carboxyhexanoyl-[ACP] + L-alanine + H(+) = (8S)-8-amino-7-oxononanoate + holo-[ACP] + CO2. The protein operates within cofactor biosynthesis; biotin biosynthesis. In terms of biological role, catalyzes the decarboxylative condensation of pimeloyl-[acyl-carrier protein] and L-alanine to produce 8-amino-7-oxononanoate (AON), [acyl-carrier protein], and carbon dioxide. In Salmonella choleraesuis (strain SC-B67), this protein is 8-amino-7-oxononanoate synthase.